The primary structure comprises 594 residues: Protein wntless (594 aa).

Residues 1-13 (MSGTILENLSGRK) are Cytoplasmic-facing. Residues 14 to 34 (LSILVATLLLCQVLCFLLGGL) traverse the membrane as a helical segment. The Lumenal segment spans residues 35–239 (YAPLPAGHVT…AIHQNGGFTQ (205 aa)). A glycan (N-linked (GlcNAc...) asparagine) is linked at N58. A helical membrane pass occupies residues 240–260 (IWLLLKTMLFPFVVGIMIWFW). The Cytoplasmic segment spans residues 261–270 (RRVHLLQRSP). The chain crosses the membrane as a helical span at residues 271–291 (ALLEYMLIYLGAALTFLNLPL). Over 292 to 311 (EYLSLVYEMPYMLLLSDIRQ) the chain is Lumenal. A helical transmembrane segment spans residues 312 to 332 (GIFYAMLLTFWLVFAGEHMLI). At 333 to 344 (QDAPNKSTIRSR) the chain is on the cytoplasmic side. Residues 345–365 (YWKHLSAVVVGCISLFVFDIC) form a helical membrane-spanning segment. Topologically, residues 366-390 (ERGVQLRNPFYSIWTTPLGAKVAMT) are lumenal. The helical transmembrane segment at 391-411 (FIVLAGVSAAIYFLFLCYMIW) threads the bilayer. Over 412–473 (KVFRNIGDKR…ANESKGLIYR (62 aa)) the chain is Cytoplasmic. Residues 474–494 (FKFLMLATLVCAALTVAGFIM) form a helical membrane-spanning segment. The Lumenal segment spans residues 495–514 (GQMAEGQWDWNDNVAIQPTS). A helical transmembrane segment spans residues 515–535 (AFLTGVYGMWNIYIFALLILY). Residues 536–594 (APSHKQWPTMHHSDETTQSNENIVASAASEEIEFSHLPSDSNPSEISSLTSFTRKVAFD) are Cytoplasmic-facing. Positions 571–594 (HLPSDSNPSEISSLTSFTRKVAFD) are disordered. Polar residues predominate over residues 573–588 (PSDSNPSEISSLTSFT).

Belongs to the wntless family. In terms of assembly, interacts with wg; in the Golgi. Interacts with Vps35, a component of the retromer complex; wls stability is regulated by Vps35. In terms of tissue distribution, ubiquitously expressed in the wing imaginal disk, increased expression is observed in a stripe at the dorso-ventral boundary and other regions of the wing disk that express wg. Also expresses in the leg imaginal disk. During larval development, expression is seen in both motorneurons and muscle.

The protein localises to the presynaptic cell membrane. Its subcellular location is the postsynaptic cell membrane. The protein resides in the cell membrane. It localises to the endosome membrane. It is found in the endoplasmic reticulum membrane. The protein localises to the golgi apparatus membrane. Functionally, a segment polarity gene required for wingless (wg)-dependent patterning processes, acting in both wg-sending cells and wg-target cells. In non-neuronal cells wls directs wg secretion. The wls traffic loop encompasses the Golgi, the cell surface, an endocytic compartment and a retrograde route leading back to the Golgi, and involves clathrin-mediated endocytosis and the retromer complex (a conserved protein complex consisting of Vps35 and Vps26). In neuronal cells (the larval motorneuron NMJ), the wg signal moves across the synapse via the release of wls-containing exosome-like vesicles. Postsynaptic wls is required for the trafficking of fz2 through the fz2-interacting protein Grip. The chain is Protein wntless from Drosophila melanogaster (Fruit fly).